The following is a 393-amino-acid chain: NAD(P)H-quinone oxidoreductase subunit H, chloroplastic (393 aa).

It belongs to the complex I 49 kDa subunit family. In terms of assembly, NDH is composed of at least 16 different subunits, 5 of which are encoded in the nucleus.

The protein localises to the plastid. The protein resides in the chloroplast thylakoid membrane. The enzyme catalyses a plastoquinone + NADH + (n+1) H(+)(in) = a plastoquinol + NAD(+) + n H(+)(out). It catalyses the reaction a plastoquinone + NADPH + (n+1) H(+)(in) = a plastoquinol + NADP(+) + n H(+)(out). Functionally, NDH shuttles electrons from NAD(P)H:plastoquinone, via FMN and iron-sulfur (Fe-S) centers, to quinones in the photosynthetic chain and possibly in a chloroplast respiratory chain. The immediate electron acceptor for the enzyme in this species is believed to be plastoquinone. Couples the redox reaction to proton translocation, and thus conserves the redox energy in a proton gradient. The polypeptide is NAD(P)H-quinone oxidoreductase subunit H, chloroplastic (Draba nemorosa (Woodland whitlowgrass)).